Here is a 547-residue protein sequence, read N- to C-terminus: MQAKTLADLYSDWDKVQAHAQAWQKRTLKDAFDADRNRAARYSVGAAGLELDFSKNHIDDETLQLLMGVADQANLKAAIKKLLRGDHVNNTEDRPALHSALRFQGKPQTAEHQEVKATLDKMAKLIKSVHSGEWKGYKGEKITDVVNIGIGGSDLGPRMITKALTPFHTGDVKVHFVANIDGAEIHDLTRGLNPSTTLFLVASKSFSTLETLENSLTARKWMLDNGCAQDQLAKHFVAISSKVEKAVEFGIAAENVYPIWDWVGGRYSLWSAIGMPIAFAIGMDNFNKLRAGAAAMDDHFAEAPLERNIPALMGLLMFWYSSCLGTDTQAILPYAYHLQLLPAYLQQLEMESNGKSVTKSGERVDYQTGSIVWGTEGTNGQHSFHQLLHQGTTMVPIDFIATLQAHHPLDHQHKFLFANCVAQSQALMTGRDQATSEAEMRAQGMSDEQIAELAPHKVHPGNRPSNTILMDKLTPETLGALIAAYEHKVYTLGVLWNINSFDQWGVELGKLLGTHVATAIDTTDIPSDWDSSTQTLVKKFTEANKNL.

Glu-351 acts as the Proton donor in catalysis. Residues His-382 and Lys-510 contribute to the active site.

Belongs to the GPI family.

It localises to the cytoplasm. It catalyses the reaction alpha-D-glucose 6-phosphate = beta-D-fructose 6-phosphate. The protein operates within carbohydrate biosynthesis; gluconeogenesis. Its pathway is carbohydrate degradation; glycolysis; D-glyceraldehyde 3-phosphate and glycerone phosphate from D-glucose: step 2/4. Functionally, catalyzes the reversible isomerization of glucose-6-phosphate to fructose-6-phosphate. The chain is Glucose-6-phosphate isomerase from Saccharophagus degradans (strain 2-40 / ATCC 43961 / DSM 17024).